The sequence spans 444 residues: Argininosuccinate synthase (444 aa).

ATP is bound by residues 18–26 (AFSGGLDTS) and Ala-44. Tyr-100 contacts L-citrulline. The ATP site is built by Gly-130 and Thr-132. Residues Thr-132, Asn-136, and Asp-137 each contribute to the L-aspartate site. Asn-136 contacts L-citrulline. Residue Asp-137 participates in ATP binding. Residues Arg-140 and Ser-193 each contribute to the L-citrulline site. Residue Asp-195 coordinates ATP. L-citrulline is bound by residues Thr-202, Glu-204, and Glu-281.

It belongs to the argininosuccinate synthase family. Type 2 subfamily. As to quaternary structure, homotetramer.

It localises to the cytoplasm. It catalyses the reaction L-citrulline + L-aspartate + ATP = 2-(N(omega)-L-arginino)succinate + AMP + diphosphate + H(+). Its pathway is amino-acid biosynthesis; L-arginine biosynthesis; L-arginine from L-ornithine and carbamoyl phosphate: step 2/3. The chain is Argininosuccinate synthase from Mannheimia succiniciproducens (strain KCTC 0769BP / MBEL55E).